A 355-amino-acid polypeptide reads, in one-letter code: uncharacterized protein (355 aa).

An N-terminal signal peptide occupies residues 1–21 (MQKKVLFNDIVFVCFPITDNG). 6 N-linked (GlcNAc...) asparagine; by host glycosylation sites follow: asparagine 20, asparagine 78, asparagine 87, asparagine 156, asparagine 159, and asparagine 274. The Virion surface portion of the chain corresponds to 22–331 (SIIISDIGYS…SSTSFFSRYG (310 aa)). A disordered region spans residues 288-317 (GSKSTPNGPNGPTPTPSNGPNGPTPVPGIP). Pro residues predominate over residues 296–317 (PNGPTPTPSNGPNGPTPVPGIP). Asparagine 320 is a glycosylation site (N-linked (GlcNAc...) asparagine; by host). The helical transmembrane segment at 332–352 (LWIIIAIILLIVIISAVGIYF) threads the bilayer. Residues 353–355 (YLR) lie on the Intravirion side of the membrane.

It is found in the host membrane. The protein resides in the virion. This is an uncharacterized protein from Acanthamoeba polyphaga mimivirus (APMV).